We begin with the raw amino-acid sequence, 275 residues long: Translation initiation factor 2 subunit alpha (275 aa).

One can recognise an S1 motif domain in the interval glycine 12–lysine 83.

Belongs to the eIF-2-alpha family. In terms of assembly, heterotrimer composed of an alpha, a beta and a gamma chain.

Its function is as follows. eIF-2 functions in the early steps of protein synthesis by forming a ternary complex with GTP and initiator tRNA. The chain is Translation initiation factor 2 subunit alpha from Thermococcus kodakarensis (strain ATCC BAA-918 / JCM 12380 / KOD1) (Pyrococcus kodakaraensis (strain KOD1)).